Here is a 464-residue protein sequence, read N- to C-terminus: UDP-glycosyltransferase 83A1 (464 aa).

UDP-alpha-D-glucose contacts are provided by residues serine 295, 341 to 343 (APQ), 358 to 366 (HCGWNSTLE), and 380 to 383 (FADQ).

Belongs to the UDP-glycosyltransferase family.

The protein is UDP-glycosyltransferase 83A1 (UGT83A1) of Arabidopsis thaliana (Mouse-ear cress).